Reading from the N-terminus, the 37-residue chain is Large ribosomal subunit protein bL36 (37 aa).

The protein belongs to the bacterial ribosomal protein bL36 family.

The sequence is that of Large ribosomal subunit protein bL36 from Histophilus somni (strain 129Pt) (Haemophilus somnus).